A 296-amino-acid chain; its full sequence is Probable endonuclease 4 (296 aa).

Positions 68, 109, 144, 178, 181, 213, 226, 228, and 258 each coordinate Zn(2+).

The protein belongs to the AP endonuclease 2 family. Zn(2+) serves as cofactor.

It catalyses the reaction Endonucleolytic cleavage to 5'-phosphooligonucleotide end-products.. In terms of biological role, endonuclease IV plays a role in DNA repair. It cleaves phosphodiester bonds at apurinic or apyrimidinic (AP) sites, generating a 3'-hydroxyl group and a 5'-terminal sugar phosphate. In Staphylococcus aureus (strain NCTC 8325 / PS 47), this protein is Probable endonuclease 4.